Consider the following 487-residue polypeptide: Cytochrome P450 720B2 (487 aa).

Residues 14-34 traverse the membrane as a helical segment; the sequence is WLVGLLCLVLGFLLLQLYKLV. C436 is a heme binding site.

The protein belongs to the cytochrome P450 family. Heme is required as a cofactor.

It is found in the membrane. The chain is Cytochrome P450 720B2 (CYP720B2) from Pinus taeda (Loblolly pine).